A 239-amino-acid polypeptide reads, in one-letter code: ATP-dependent dethiobiotin synthetase BioD (239 aa).

15-20 (EIGKTF) is an ATP binding site. Threonine 19 serves as a coordination point for Mg(2+). Lysine 40 is an active-site residue. ATP contacts are provided by residues aspartate 57, 118–121 (EGVG), and 178–179 (NH). Residues aspartate 57 and glutamate 118 each contribute to the Mg(2+) site.

The protein belongs to the dethiobiotin synthetase family. As to quaternary structure, homodimer. It depends on Mg(2+) as a cofactor.

The protein resides in the cytoplasm. It carries out the reaction (7R,8S)-7,8-diammoniononanoate + CO2 + ATP = (4R,5S)-dethiobiotin + ADP + phosphate + 3 H(+). It participates in cofactor biosynthesis; biotin biosynthesis; biotin from 7,8-diaminononanoate: step 1/2. Its function is as follows. Catalyzes a mechanistically unusual reaction, the ATP-dependent insertion of CO2 between the N7 and N8 nitrogen atoms of 7,8-diaminopelargonic acid (DAPA, also called 7,8-diammoniononanoate) to form a ureido ring. The chain is ATP-dependent dethiobiotin synthetase BioD from Burkholderia orbicola (strain MC0-3).